Consider the following 370-residue polypeptide: DNA replication and repair protein RecF (370 aa).

An ATP-binding site is contributed by 30–37; the sequence is GDNGSGKT.

It belongs to the RecF family.

The protein resides in the cytoplasm. Its function is as follows. The RecF protein is involved in DNA metabolism; it is required for DNA replication and normal SOS inducibility. RecF binds preferentially to single-stranded, linear DNA. It also seems to bind ATP. In Stutzerimonas stutzeri (strain A1501) (Pseudomonas stutzeri), this protein is DNA replication and repair protein RecF.